The sequence spans 965 residues: Argonaute protein wago-4 (965 aa).

A disordered region spans residues 1–34 (MPALPPVYTPSGAPSSVHAPPAVPPVPVPTQPLR). The segment covering 10–20 (PSGAPSSVHAP) has biased composition (low complexity). A compositionally biased stretch (pro residues) spans 21-30 (PAVPPVPVPT). In terms of domain architecture, PAZ spans 318–428 (PILDKLKEIT…YPMELLKISS (111 aa)). Residues 594–924 (TFVFIITDDS…YAKRGRNLWN (331 aa)) form the Piwi domain.

The protein belongs to the argonaute family. WAGO subfamily. Interacts with znfx-1; the interaction promotes the transmission of epigenetic information across generations. May interact with mina-1. As to expression, expressed in the hermaphrodite germline and in oocytes. Expressed at a low level in the male germline. Not expressed in the soma of hermaphrodites or males.

The protein localises to the cytoplasm. It localises to the perinuclear region. It is found in the cytoplasmic granule. Its function is as follows. Argonaute protein which is involved in the endogenous small interfering RNA (endo-siRNA) pathway and is required for RNA-mediated gene silencing (RNAi) in the germline. Interacts with secondary 22G-RNAs, which are RNA-dependent RNA polymerase-derived endo-siRNAs, typically 22 nucleotides in length with a 5'guanosine residue. Also interacts with the mRNA targets of 22G-RNAs. Associates with znfx-1 to mediate small RNA-directed transgenerational epigenetic inheritance of both germline- and soma-expressed genes. In Caenorhabditis elegans, this protein is Argonaute protein wago-4.